Reading from the N-terminus, the 290-residue chain is Bifunctional protein FolD (290 aa).

NADP(+) is bound by residues 165–167 (GRS), serine 190, and isoleucine 231.

This sequence belongs to the tetrahydrofolate dehydrogenase/cyclohydrolase family. As to quaternary structure, homodimer.

It catalyses the reaction (6R)-5,10-methylene-5,6,7,8-tetrahydrofolate + NADP(+) = (6R)-5,10-methenyltetrahydrofolate + NADPH. The enzyme catalyses (6R)-5,10-methenyltetrahydrofolate + H2O = (6R)-10-formyltetrahydrofolate + H(+). It functions in the pathway one-carbon metabolism; tetrahydrofolate interconversion. In terms of biological role, catalyzes the oxidation of 5,10-methylenetetrahydrofolate to 5,10-methenyltetrahydrofolate and then the hydrolysis of 5,10-methenyltetrahydrofolate to 10-formyltetrahydrofolate. This chain is Bifunctional protein FolD, found in Aromatoleum aromaticum (strain DSM 19018 / LMG 30748 / EbN1) (Azoarcus sp. (strain EbN1)).